The sequence spans 88 residues: Small ribosomal subunit protein bS16 (88 aa).

The protein belongs to the bacterial ribosomal protein bS16 family.

The polypeptide is Small ribosomal subunit protein bS16 (Anaeromyxobacter sp. (strain Fw109-5)).